Here is a 360-residue protein sequence, read N- to C-terminus: DNA replication and repair protein RecF (360 aa).

ATP is bound at residue G30–T37.

The protein belongs to the RecF family.

The protein resides in the cytoplasm. In terms of biological role, the RecF protein is involved in DNA metabolism; it is required for DNA replication and normal SOS inducibility. RecF binds preferentially to single-stranded, linear DNA. It also seems to bind ATP. In Shewanella putrefaciens (strain CN-32 / ATCC BAA-453), this protein is DNA replication and repair protein RecF.